The sequence spans 314 residues: tRNA pseudouridine synthase B (314 aa).

Residue histidine 43 coordinates substrate. Catalysis depends on aspartate 48, which acts as the Nucleophile. Substrate is bound by residues tyrosine 76, tyrosine 179, and leucine 200.

This sequence belongs to the pseudouridine synthase TruB family. Type 1 subfamily.

It carries out the reaction uridine(55) in tRNA = pseudouridine(55) in tRNA. Its function is as follows. Responsible for synthesis of pseudouridine from uracil-55 in the psi GC loop of transfer RNAs. This Salmonella choleraesuis (strain SC-B67) protein is tRNA pseudouridine synthase B.